A 203-amino-acid polypeptide reads, in one-letter code: Shikimate kinase (203 aa).

ATP is bound at residue 32–37 (GAGKTA). Mg(2+) is bound at residue threonine 36. Residues aspartate 54, arginine 78, and glycine 100 each coordinate substrate. Residue arginine 138 participates in ATP binding. Arginine 157 provides a ligand contact to substrate.

The protein belongs to the shikimate kinase family. As to quaternary structure, monomer. Mg(2+) is required as a cofactor.

The protein localises to the cytoplasm. The enzyme catalyses shikimate + ATP = 3-phosphoshikimate + ADP + H(+). The protein operates within metabolic intermediate biosynthesis; chorismate biosynthesis; chorismate from D-erythrose 4-phosphate and phosphoenolpyruvate: step 5/7. Functionally, catalyzes the specific phosphorylation of the 3-hydroxyl group of shikimic acid using ATP as a cosubstrate. The protein is Shikimate kinase of Mesorhizobium japonicum (strain LMG 29417 / CECT 9101 / MAFF 303099) (Mesorhizobium loti (strain MAFF 303099)).